The sequence spans 261 residues: 5'-nucleotidase SurE (261 aa).

Residues D8, D9, S43, and N96 each coordinate a divalent metal cation.

Belongs to the SurE nucleotidase family. It depends on a divalent metal cation as a cofactor.

The protein resides in the cytoplasm. The catalysed reaction is a ribonucleoside 5'-phosphate + H2O = a ribonucleoside + phosphate. Functionally, nucleotidase that shows phosphatase activity on nucleoside 5'-monophosphates. The protein is 5'-nucleotidase SurE of Cereibacter sphaeroides (strain ATCC 17029 / ATH 2.4.9) (Rhodobacter sphaeroides).